Reading from the N-terminus, the 112-residue chain is Cornifelin homolog (112 aa).

Belongs to the cornifelin family.

This Danio rerio (Zebrafish) protein is Cornifelin homolog (cnfn).